The chain runs to 196 residues: Holliday junction branch migration complex subunit RuvA (196 aa).

A domain I region spans residues 1–65 (MIGYLRGKII…EDALQLFGFH (65 aa)). The tract at residues 66–140 (DKEEKNLFLS…GKLVSIEEGG (75 aa)) is domain II. The interval 140–144 (GVVAK) is flexible linker. The interval 145–196 (AKSVAHTQITSALLNLGYKSQLVDQFVSSLPADIAVEDGIRKGFQTLSGGLS) is domain III.

It belongs to the RuvA family. In terms of assembly, homotetramer. Forms an RuvA(8)-RuvB(12)-Holliday junction (HJ) complex. HJ DNA is sandwiched between 2 RuvA tetramers; dsDNA enters through RuvA and exits via RuvB. An RuvB hexamer assembles on each DNA strand where it exits the tetramer. Each RuvB hexamer is contacted by two RuvA subunits (via domain III) on 2 adjacent RuvB subunits; this complex drives branch migration. In the full resolvosome a probable DNA-RuvA(4)-RuvB(12)-RuvC(2) complex forms which resolves the HJ.

Its subcellular location is the cytoplasm. The RuvA-RuvB-RuvC complex processes Holliday junction (HJ) DNA during genetic recombination and DNA repair, while the RuvA-RuvB complex plays an important role in the rescue of blocked DNA replication forks via replication fork reversal (RFR). RuvA specifically binds to HJ cruciform DNA, conferring on it an open structure. The RuvB hexamer acts as an ATP-dependent pump, pulling dsDNA into and through the RuvAB complex. HJ branch migration allows RuvC to scan DNA until it finds its consensus sequence, where it cleaves and resolves the cruciform DNA. This Bdellovibrio bacteriovorus (strain ATCC 15356 / DSM 50701 / NCIMB 9529 / HD100) protein is Holliday junction branch migration complex subunit RuvA.